Reading from the N-terminus, the 60-residue chain is UPF0391 membrane protein CCNA_00709 (60 aa).

Helical transmembrane passes span 4-24 (WAII…SGLA) and 33-53 (ILFF…GTVF).

The protein belongs to the UPF0391 family.

The protein localises to the cell membrane. The polypeptide is UPF0391 membrane protein CCNA_00709 (Caulobacter vibrioides (strain NA1000 / CB15N) (Caulobacter crescentus)).